Consider the following 149-residue polypeptide: Myoglobin (149 aa).

Val-2 carries the N-acetylvaline modification. The region spanning 2 to 143 is the Globin domain; sequence VDWEKVNSVW…ICSDIEKEYK (142 aa). Position 89 (His-89) interacts with heme b.

This sequence belongs to the globin family. Monomeric.

It is found in the cytoplasm. It localises to the sarcoplasm. The enzyme catalyses Fe(III)-heme b-[protein] + nitric oxide + H2O = Fe(II)-heme b-[protein] + nitrite + 2 H(+). The catalysed reaction is H2O2 + AH2 = A + 2 H2O. In terms of biological role, monomeric heme protein which primary function is to store oxygen and facilitate its diffusion within muscle tissues. Reversibly binds oxygen through a pentacoordinated heme iron and enables its timely and efficient release as needed during periods of heightened demand. Depending on the oxidative conditions of tissues and cells, and in addition to its ability to bind oxygen, it also has a nitrite reductase activity whereby it regulates the production of bioactive nitric oxide. Under stress conditions, like hypoxia and anoxia, it also protects cells against reactive oxygen species thanks to its pseudoperoxidase activity. This chain is Myoglobin (mb), found in Mustelus antarcticus (Gummy shark).